The chain runs to 563 residues: Putative ABC transporter ATP-binding protein SCO2324 (563 aa).

The 242-residue stretch at 2 to 243 (IRFEDVSVTY…SPVYPPVVGL (242 aa)) folds into the ABC transporter 1 domain. Position 36–43 (36–43 (GPSGVGKS)) interacts with ATP. Positions 271 to 317 (AGREIPDHTPPPSAPLPAPPAPRPVTSRWRRRGKRPENPSAPTPYAA) are disordered. The span at 278-293 (HTPPPSAPLPAPPAPR) shows a compositional bias: pro residues. In terms of domain architecture, ABC transporter 2 spans 317–545 (AEVRSLAVRR…SPSYAPQVAK (229 aa)). Residue 349–356 (GRNGAGKS) coordinates ATP.

It belongs to the ABC transporter superfamily.

The protein resides in the cell membrane. In terms of biological role, probably part of an ABC transporter complex. Responsible for energy coupling to the transport system. The protein is Putative ABC transporter ATP-binding protein SCO2324 of Streptomyces coelicolor (strain ATCC BAA-471 / A3(2) / M145).